We begin with the raw amino-acid sequence, 262 residues long: Phosphoribosylformylglycinamidine synthase subunit PurQ (262 aa).

One can recognise a Glutamine amidotransferase type-1 domain in the interval 2-238 (RIAVIQFPGT…FAWQLPRKHP (237 aa)). Cys87 functions as the Nucleophile in the catalytic mechanism. Active-site residues include His223 and Glu225.

Part of the FGAM synthase complex composed of 1 PurL, 1 PurQ and 2 PurS subunits.

The protein resides in the cytoplasm. The enzyme catalyses N(2)-formyl-N(1)-(5-phospho-beta-D-ribosyl)glycinamide + L-glutamine + ATP + H2O = 2-formamido-N(1)-(5-O-phospho-beta-D-ribosyl)acetamidine + L-glutamate + ADP + phosphate + H(+). The catalysed reaction is L-glutamine + H2O = L-glutamate + NH4(+). The protein operates within purine metabolism; IMP biosynthesis via de novo pathway; 5-amino-1-(5-phospho-D-ribosyl)imidazole from N(2)-formyl-N(1)-(5-phospho-D-ribosyl)glycinamide: step 1/2. In terms of biological role, part of the phosphoribosylformylglycinamidine synthase complex involved in the purines biosynthetic pathway. Catalyzes the ATP-dependent conversion of formylglycinamide ribonucleotide (FGAR) and glutamine to yield formylglycinamidine ribonucleotide (FGAM) and glutamate. The FGAM synthase complex is composed of three subunits. PurQ produces an ammonia molecule by converting glutamine to glutamate. PurL transfers the ammonia molecule to FGAR to form FGAM in an ATP-dependent manner. PurS interacts with PurQ and PurL and is thought to assist in the transfer of the ammonia molecule from PurQ to PurL. This Methanothrix thermoacetophila (strain DSM 6194 / JCM 14653 / NBRC 101360 / PT) (Methanosaeta thermophila) protein is Phosphoribosylformylglycinamidine synthase subunit PurQ.